A 408-amino-acid polypeptide reads, in one-letter code: Myb/SANT-like DNA-binding domain-containing protein 4 (408 aa).

The 74-residue stretch at 4 to 77 (LKRKRKSNFS…EVKRRYLDWR (74 aa)) folds into the Myb-like domain. The stretch at 236-367 (HLLVTLEKQK…IEKERLQDAL (132 aa)) forms a coiled coil.

This Xenopus tropicalis (Western clawed frog) protein is Myb/SANT-like DNA-binding domain-containing protein 4 (msantd4).